The sequence spans 1297 residues: MEQIVTFGGITIDNVSPDHIQQLYSVKLNGTSNNEEIPTEFPNIIQSVCSCDKHVVELTMDVFKLVDTTENSSCAICRYQENEPCIEHKSSESNTKCPIAQSVSCSHSFHACCISRWLHTKKTCPLCNIEWQLIGANNDSVVIYFDDKNQEFKLSDNLVEDIGRQFGIDMDNYIVCKNKSPVTEYKNSTYALCTRDRHNSQNGQTNLKIICEFDSKTENLFIKYSTTIEELRKLVSQTFDLFKDQVKLIYNNIEISKDFDNLTVFNIGIKNDSNLAVECYKSFTYDMEITNNFMVLYVPDTFNTTNSSNNIQSVVSGSIAWIPQPFIDNVTNKDLRCLLSSLYILVKKVNLNTELIQSVTDRFEKYMELYGMHYRQIKLAKDSLRCLLEMNHFNNKDRMILSCTFYELIDRIQRDNNINKNPLLSSNLICNLILSDKQVNEQTKINWKFLAKDVRITKVFNIYSPLVLTNSVPPLLTLNKNLDVVVFTGKGKDVSLPIILYDTLTNSETDVNAAELGKIVSDKGDLMMVDDRIYEEAIMVCIDTSNSMSKASDFDEDIKLKRSSIIETKNRFYEILKTESHSSPQESDIRQLTNTIIWFITHPNFEDWYRKLYSQELIRSIACFEQKVYPNFAMMLVKYPWFFNKLLTSKKVVVNNTWYSFIRNESNSNYNETKYSKEPLQEFLCPISHEIMEHPVVAKDGFTYEKSNILKWFENKSTSPMTNEKISKKICDNKVLKSIIRDWKENNTVIEQSDKLSVTIKLPDPWNETVIHYNETDNIWDLIYQIYHITGLSHDQYKLTSNYWAIDKSSLIKQISSKIKIHPFEKKMVDVKICDKTYFFGTENTMTVSSFYTVGNLLYKLKSRKYHRYAVWYGLKDSGDGFQRGTILSPHDKLIDYSEMTLEIHSSNRYKTPKGNHLSRLDVVKKLFDAYINRSIAYSFNTAIGLMSFSDKSVLECAISPFYESFREKVNELDTSGATALYECLKDSIENLIEWKNADLENRSKAKLRIICLTDGKDTGLDKFKNTVKHKSQYHNVTIDCILIGSDYDNYLGKIGEKTNGYVFNPSTIKYALDIMELETMISSTNRKTIFYHNTIDEKTIPPIINPTKKLHAKAISPMEIISKTNENTKLSQKLIRVQREIVDVMKNQHPDIDVYINEQDISFWKIVFKGPDSTPYKNGTWLAYIQFTEEYPNIAPNIRFVTPIKHCNINNYGRVCHSILDRNYTPNVKISLILQCIYGLLLNPDVNDPLDTNLAMIYYDANGLYEAQIIDYVNKFALKSREEWNQELAKNQFKNW.

The segment at 74-128 (CAICRYQENEPCIEHKSSESNTKCPIAQSVSCSHSFHACCISRWLHTKKTCPLCN) adopts an RING-type; atypical zinc-finger fold. Residues 678-750 (EPLQEFLCPI…RDWKENNTVI (73 aa)) enclose the U-box domain. Residues 899–1082 (EMTLEIHSSN…LDIMELETMI (184 aa)) enclose the VWFA domain. The UBC core domain maps to 1133 to 1279 (QKLIRVQREI…IIDYVNKFAL (147 aa)). Cys1217 acts as the Glycyl thioester intermediate in catalysis.

This sequence in the C-terminal section; belongs to the ubiquitin-conjugating enzyme family.

It carries out the reaction S-ubiquitinyl-[E2 ubiquitin-conjugating enzyme]-L-cysteine + [acceptor protein]-L-lysine = [E2 ubiquitin-conjugating enzyme]-L-cysteine + N(6)-ubiquitinyl-[acceptor protein]-L-lysine.. The catalysed reaction is S-ubiquitinyl-[E1 ubiquitin-activating enzyme]-L-cysteine + [E2 ubiquitin-conjugating enzyme]-L-cysteine = [E1 ubiquitin-activating enzyme]-L-cysteine + S-ubiquitinyl-[E2 ubiquitin-conjugating enzyme]-L-cysteine.. It functions in the pathway protein modification; protein ubiquitination. Functionally, catalyzes the covalent attachment of ubiquitin to other proteins. Also acts as an E3 ubiquitin-protein ligase. This chain is Probable bifunctional E2/E3 enzyme R795, found in Acanthamoeba polyphaga (Amoeba).